Reading from the N-terminus, the 242-residue chain is Glucosamine-6-phosphate deaminase (242 aa).

Residue aspartate 67 is the Proton acceptor; for enolization step of the active site. The active-site For ring-opening step is asparagine 136. The active-site Proton acceptor; for ring-opening step is the histidine 138. The active-site For ring-opening step is the glutamate 143.

Belongs to the glucosamine/galactosamine-6-phosphate isomerase family. NagB subfamily.

It carries out the reaction alpha-D-glucosamine 6-phosphate + H2O = beta-D-fructose 6-phosphate + NH4(+). Its pathway is amino-sugar metabolism; N-acetylneuraminate degradation; D-fructose 6-phosphate from N-acetylneuraminate: step 5/5. In terms of biological role, catalyzes the reversible isomerization-deamination of glucosamine 6-phosphate (GlcN6P) to form fructose 6-phosphate (Fru6P) and ammonium ion. The polypeptide is Glucosamine-6-phosphate deaminase (Clostridium perfringens (strain 13 / Type A)).